A 314-amino-acid polypeptide reads, in one-letter code: MTSVIFMGTPQFSAPILSSLIDNGYDVLAVVTQPDRRVGRKHVLTASPVKQVAVAHDIEVLQPEKISGSSEMARAIELAPDLIVTAAFGQFLPTKLLKAAKVAAVNVHASLLPKYRGGAPVHYAIMNGDSETGVSIMFMEKKMDAGAVLAQRAIPITDQDDVGTMFAKLSDLGRDLLLETLPKLLAGELTPVPQDESQVSFSPTIKPEEERVDINLSARMIDCKVRALRPFPTAHIYLNGVRTKLWHVTVLDQKTDLQPGAVVSRDKHHLAIATGEQGVLSLDELQPAGKPKLSITDYLNGTTDALTVGEQVAE.

(6S)-5,6,7,8-tetrahydrofolate is bound at residue 110 to 113 (SLLP).

The protein belongs to the Fmt family.

The enzyme catalyses L-methionyl-tRNA(fMet) + (6R)-10-formyltetrahydrofolate = N-formyl-L-methionyl-tRNA(fMet) + (6S)-5,6,7,8-tetrahydrofolate + H(+). In terms of biological role, attaches a formyl group to the free amino group of methionyl-tRNA(fMet). The formyl group appears to play a dual role in the initiator identity of N-formylmethionyl-tRNA by promoting its recognition by IF2 and preventing the misappropriation of this tRNA by the elongation apparatus. This Levilactobacillus brevis (strain ATCC 367 / BCRC 12310 / CIP 105137 / JCM 1170 / LMG 11437 / NCIMB 947 / NCTC 947) (Lactobacillus brevis) protein is Methionyl-tRNA formyltransferase.